A 481-amino-acid polypeptide reads, in one-letter code: Trigger factor (481 aa).

Positions 174-261 (GDIAVVGFKG…LKDLKTRELP (88 aa)) constitute a PPIase FKBP-type domain. The disordered stretch occupies residues 430 to 481 (ENSTVTEKAPEAESDAAKASKPAAAKKDASKAKTAKTSKAKTAKAESESAES). The segment covering 437–447 (KAPEAESDAAK) has biased composition (basic and acidic residues). Over residues 462–471 (KTAKTSKAKT) the composition is skewed to basic residues. Over residues 472–481 (AKAESESAES) the composition is skewed to basic and acidic residues.

This sequence belongs to the FKBP-type PPIase family. Tig subfamily.

The protein localises to the cytoplasm. The enzyme catalyses [protein]-peptidylproline (omega=180) = [protein]-peptidylproline (omega=0). Functionally, involved in protein export. Acts as a chaperone by maintaining the newly synthesized protein in an open conformation. Functions as a peptidyl-prolyl cis-trans isomerase. The chain is Trigger factor from Synechococcus sp. (strain WH7803).